A 182-amino-acid polypeptide reads, in one-letter code: uncharacterized protein (182 aa).

It belongs to the staphylococcal tandem lipoprotein family.

This is an uncharacterized protein from Staphylococcus haemolyticus (strain JCSC1435).